A 299-amino-acid polypeptide reads, in one-letter code: Oxygen-dependent coproporphyrinogen-III oxidase (299 aa).

Ser92 is a binding site for substrate. Residues His96 and His106 each contribute to the a divalent metal cation site. Catalysis depends on His106, which acts as the Proton donor. 108-110 (NVR) is a substrate binding site. A divalent metal cation-binding residues include His145 and His175. Residues 240 to 275 (YVEFNLVWDRGTLFGLQTGGRTESILMSMPPLVRWE) form an important for dimerization region. 258 to 260 (GGR) contacts substrate.

This sequence belongs to the aerobic coproporphyrinogen-III oxidase family. As to quaternary structure, homodimer. The cofactor is a divalent metal cation.

It localises to the cytoplasm. It carries out the reaction coproporphyrinogen III + O2 + 2 H(+) = protoporphyrinogen IX + 2 CO2 + 2 H2O. Its pathway is porphyrin-containing compound metabolism; protoporphyrin-IX biosynthesis; protoporphyrinogen-IX from coproporphyrinogen-III (O2 route): step 1/1. Its function is as follows. Involved in the heme biosynthesis. Catalyzes the aerobic oxidative decarboxylation of propionate groups of rings A and B of coproporphyrinogen-III to yield the vinyl groups in protoporphyrinogen-IX. This is Oxygen-dependent coproporphyrinogen-III oxidase from Salmonella enteritidis PT4 (strain P125109).